The following is a 192-amino-acid chain: uncharacterized protein (192 aa).

The protein to A.aeolicus AQ_054.

This is an uncharacterized protein from Thermotoga maritima (strain ATCC 43589 / DSM 3109 / JCM 10099 / NBRC 100826 / MSB8).